The primary structure comprises 61 residues: Small ribosomal subunit protein uS14 (61 aa).

Zn(2+)-binding residues include C24, C27, C40, and C43.

This sequence belongs to the universal ribosomal protein uS14 family. Zinc-binding uS14 subfamily. In terms of assembly, part of the 30S ribosomal subunit. Contacts proteins S3 and S10. Zn(2+) serves as cofactor.

Binds 16S rRNA, required for the assembly of 30S particles and may also be responsible for determining the conformation of the 16S rRNA at the A site. The protein is Small ribosomal subunit protein uS14 of Campylobacter lari (strain RM2100 / D67 / ATCC BAA-1060).